The following is a 483-amino-acid chain: Glutamyl-tRNA(Gln) amidotransferase subunit A (483 aa).

Catalysis depends on charge relay system residues K76 and S151. S175 (acyl-ester intermediate) is an active-site residue.

This sequence belongs to the amidase family. GatA subfamily. As to quaternary structure, heterotrimer of A, B and C subunits.

It catalyses the reaction L-glutamyl-tRNA(Gln) + L-glutamine + ATP + H2O = L-glutaminyl-tRNA(Gln) + L-glutamate + ADP + phosphate + H(+). Functionally, allows the formation of correctly charged Gln-tRNA(Gln) through the transamidation of misacylated Glu-tRNA(Gln) in organisms which lack glutaminyl-tRNA synthetase. The reaction takes place in the presence of glutamine and ATP through an activated gamma-phospho-Glu-tRNA(Gln). This Nitrosococcus oceani (strain ATCC 19707 / BCRC 17464 / JCM 30415 / NCIMB 11848 / C-107) protein is Glutamyl-tRNA(Gln) amidotransferase subunit A.